We begin with the raw amino-acid sequence, 293 residues long: Ribonuclease HIII (293 aa).

In terms of domain architecture, RNase H type-2 spans 78–293 (LPLIGTDEVG…TEKAKKRLER (216 aa)). A divalent metal cation contacts are provided by D84, E85, and D187.

The protein belongs to the RNase HII family. RnhC subfamily. Requires Mn(2+) as cofactor. Mg(2+) serves as cofactor.

It is found in the cytoplasm. It carries out the reaction Endonucleolytic cleavage to 5'-phosphomonoester.. Endonuclease that specifically degrades the RNA of RNA-DNA hybrids. The protein is Ribonuclease HIII of Streptococcus pneumoniae (strain 70585).